An 88-amino-acid polypeptide reads, in one-letter code: UPF0297 protein Bcer98_3100 (88 aa).

Belongs to the UPF0297 family.

This chain is UPF0297 protein Bcer98_3100, found in Bacillus cytotoxicus (strain DSM 22905 / CIP 110041 / 391-98 / NVH 391-98).